Consider the following 114-residue polypeptide: Cuticle protein CP1158 (114 aa).

Residue glutamine 1 is modified to Pyrrolidone carboxylic acid. Repeat copies occupy residues 1–17 (QVGYSGIVSPDGNNIQF), 26–43 (VLKGPSGIVTSDGKNLQL), 70–87 (SVVGPSGIVSPSGNVQFS), and 95–112 (VLVGPSGIVTKDGNNLQL).

Calcified shell.

In Cancer pagurus (Rock crab), this protein is Cuticle protein CP1158.